The following is a 162-amino-acid chain: NADH-quinone oxidoreductase subunit I (162 aa).

4Fe-4S ferredoxin-type domains are found at residues 52 to 82 (LRRYPNGEERCIACKLCEAVCPAQAITIEAG) and 93 to 122 (VRYDIDMVKCIYCGLCQEACPVDAIVEGPN). Positions 62, 65, 68, 72, 102, 105, 108, and 112 each coordinate [4Fe-4S] cluster.

Belongs to the complex I 23 kDa subunit family. In terms of assembly, NDH-1 is composed of 14 different subunits. Subunits NuoA, H, J, K, L, M, N constitute the membrane sector of the complex. [4Fe-4S] cluster serves as cofactor.

It localises to the cell inner membrane. It catalyses the reaction a quinone + NADH + 5 H(+)(in) = a quinol + NAD(+) + 4 H(+)(out). NDH-1 shuttles electrons from NADH, via FMN and iron-sulfur (Fe-S) centers, to quinones in the respiratory chain. The immediate electron acceptor for the enzyme in this species is believed to be ubiquinone. Couples the redox reaction to proton translocation (for every two electrons transferred, four hydrogen ions are translocated across the cytoplasmic membrane), and thus conserves the redox energy in a proton gradient. This is NADH-quinone oxidoreductase subunit I from Nitrobacter winogradskyi (strain ATCC 25391 / DSM 10237 / CIP 104748 / NCIMB 11846 / Nb-255).